The following is a 135-amino-acid chain: Histone H3 (135 aa).

Residues 1-40 (MARTKQTARKSTGGKAPRKAVATKARKTAPPVGGVKKPHR) form a disordered region. The segment covering 19-31 (KAVATKARKTAPP) has biased composition (low complexity).

It belongs to the histone H3 family. In terms of assembly, the nucleosome is a histone octamer containing two molecules each of H2A, H2B, H3 and H4 assembled in one H3-H4 heterotetramer and two H2A-H2B heterodimers. The octamer wraps approximately 147 bp of DNA.

The protein resides in the nucleus. The protein localises to the chromosome. In terms of biological role, core component of nucleosome. Nucleosomes wrap and compact DNA into chromatin, limiting DNA accessibility to the cellular machineries which require DNA as a template. Histones thereby play a central role in transcription regulation, DNA repair, DNA replication and chromosomal stability. DNA accessibility is regulated via a complex set of post-translational modifications of histones, also called histone code, and nucleosome remodeling. In Mastigamoeba balamuthi (Phreatamoeba balamuthi), this protein is Histone H3.